We begin with the raw amino-acid sequence, 197 residues long: Probable S-adenosylmethionine-dependent methyltransferase MJ0882 (197 aa).

S-adenosyl-L-methionine contacts are provided by residues 63-67 (GCGYG), Asp84, and Asn129. A substrate-binding site is contributed by 129–132 (NPPI).

The protein belongs to the methyltransferase superfamily.

Functionally, probable methyltransferase that uses S-adenosylmethionine as the methyl donor. Binds neither NAD nor NADP in vitro. In Methanocaldococcus jannaschii (strain ATCC 43067 / DSM 2661 / JAL-1 / JCM 10045 / NBRC 100440) (Methanococcus jannaschii), this protein is Probable S-adenosylmethionine-dependent methyltransferase MJ0882.